A 242-amino-acid polypeptide reads, in one-letter code: Protein CDV3 homolog B (242 aa).

Over residues 1-15 (MAEPEERSLDDFFAK) the composition is skewed to basic and acidic residues. A disordered region spans residues 1-242 (MAEPEERSLD…DNQYAVLGEQ (242 aa)). At A2 the chain carries N-acetylalanine. Residues 30-57 (AAGSRGPARPSDGATSSSLSSYVSAAGK) show a composition bias toward low complexity. Over residues 59-75 (VKKEKSGKSENPDQLQE) the composition is skewed to basic and acidic residues. Residues 105–122 (KEDDENENKEEQGADWEE) are compositionally biased toward acidic residues. Polar residues-rich tracts occupy residues 129-143 (DKSSGPWNKTAQAQA) and 183-194 (SDTQFPSPQATA). Basic and acidic residues predominate over residues 195–213 (KHTESRREKEMEKTFEIVK).

Belongs to the CDV3 family.

It is found in the cytoplasm. In Xenopus laevis (African clawed frog), this protein is Protein CDV3 homolog B (cdv3-b).